Here is a 406-residue protein sequence, read N- to C-terminus: Outer membrane protein assembly factor BamB (406 aa).

A signal peptide spans 1 to 23 (MMKQVDMYKRVALIALMGMSLAG). A lipid anchor (N-palmitoyl cysteine) is attached at cysteine 24. Cysteine 24 carries the S-diacylglycerol cysteine lipid modification.

Belongs to the BamB family. Part of the Bam complex.

Its subcellular location is the cell outer membrane. Its function is as follows. Part of the outer membrane protein assembly complex, which is involved in assembly and insertion of beta-barrel proteins into the outer membrane. The polypeptide is Outer membrane protein assembly factor BamB (Xanthomonas campestris pv. campestris (strain ATCC 33913 / DSM 3586 / NCPPB 528 / LMG 568 / P 25)).